A 931-amino-acid chain; its full sequence is Bifunctional glutamine synthetase adenylyltransferase/adenylyl-removing enzyme (931 aa).

An adenylyl removase region spans residues 1–434 (MTLAPADLPA…STEFAALLAP (434 aa)). The segment at 441-931 (PDALANYWRS…ACIAAELPFA (491 aa)) is adenylyl transferase.

It belongs to the GlnE family. It depends on Mg(2+) as a cofactor.

The catalysed reaction is [glutamine synthetase]-O(4)-(5'-adenylyl)-L-tyrosine + phosphate = [glutamine synthetase]-L-tyrosine + ADP. It catalyses the reaction [glutamine synthetase]-L-tyrosine + ATP = [glutamine synthetase]-O(4)-(5'-adenylyl)-L-tyrosine + diphosphate. Functionally, involved in the regulation of glutamine synthetase GlnA, a key enzyme in the process to assimilate ammonia. When cellular nitrogen levels are high, the C-terminal adenylyl transferase (AT) inactivates GlnA by covalent transfer of an adenylyl group from ATP to specific tyrosine residue of GlnA, thus reducing its activity. Conversely, when nitrogen levels are low, the N-terminal adenylyl removase (AR) activates GlnA by removing the adenylyl group by phosphorolysis, increasing its activity. The regulatory region of GlnE binds the signal transduction protein PII (GlnB) which indicates the nitrogen status of the cell. This chain is Bifunctional glutamine synthetase adenylyltransferase/adenylyl-removing enzyme, found in Stenotrophomonas maltophilia (strain R551-3).